We begin with the raw amino-acid sequence, 411 residues long: Metacaspase-1B (411 aa).

A disordered region spans residues 1–97 (MYHRHSAPPP…PPLEAQQFGN (97 aa)). The span at 7-65 (APPPPGRSRGYPPPQQQWPPQPYQYLPYPPQGPPPAHTFPPPAHRSYPSPYPTPPPHSP) shows a compositional bias: pro residues. Residues His-198 and Cys-254 contribute to the active site.

Belongs to the peptidase C14B family.

In terms of biological role, involved in cell death (apoptosis). This is Metacaspase-1B (casB) from Neosartorya fischeri (strain ATCC 1020 / DSM 3700 / CBS 544.65 / FGSC A1164 / JCM 1740 / NRRL 181 / WB 181) (Aspergillus fischerianus).